The sequence spans 360 residues: Phospho-N-acetylmuramoyl-pentapeptide-transferase (360 aa).

10 helical membrane passes run 27-47, 71-91, 93-113, 134-154, 168-188, 199-219, 239-259, 262-282, 288-308, and 337-357; these read GAFMTALIFGFLFGRPLINVL, TPTMGGLLIVGALLTSTLLWA, WDNPFVWMVLFVTLAYALIGF, LALGVIIAVIAALWASYNHPA, TLINLGLLYVPFAICVIVGSA, GLAIMPAMIAASTLGVIAYAV, ILIFTAALFGAGLGFLWYNAP, AVFMGDTGSLALGGALGAIAV, LVLAIVGGLFVVEALSVIIQV, and TIVIRFWIISLILAMIGLATL.

The protein belongs to the glycosyltransferase 4 family. MraY subfamily. Mg(2+) is required as a cofactor.

The protein resides in the cell inner membrane. It catalyses the reaction UDP-N-acetyl-alpha-D-muramoyl-L-alanyl-gamma-D-glutamyl-meso-2,6-diaminopimeloyl-D-alanyl-D-alanine + di-trans,octa-cis-undecaprenyl phosphate = di-trans,octa-cis-undecaprenyl diphospho-N-acetyl-alpha-D-muramoyl-L-alanyl-D-glutamyl-meso-2,6-diaminopimeloyl-D-alanyl-D-alanine + UMP. It functions in the pathway cell wall biogenesis; peptidoglycan biosynthesis. Catalyzes the initial step of the lipid cycle reactions in the biosynthesis of the cell wall peptidoglycan: transfers peptidoglycan precursor phospho-MurNAc-pentapeptide from UDP-MurNAc-pentapeptide onto the lipid carrier undecaprenyl phosphate, yielding undecaprenyl-pyrophosphoryl-MurNAc-pentapeptide, known as lipid I. The chain is Phospho-N-acetylmuramoyl-pentapeptide-transferase from Ruegeria pomeroyi (strain ATCC 700808 / DSM 15171 / DSS-3) (Silicibacter pomeroyi).